The primary structure comprises 306 residues: Serrate RNA effector molecule homolog (306 aa).

The tract at residues 1–28 (HKEEELLGSSGGPPPEEPPKEGNPAEIN) is disordered. T101 carries the phosphothreonine modification. S109 is modified (phosphoserine). Residues 251–284 (GPPYPHGPYGAGRGNYDAFRGQGGYPGKPRNRMV) are disordered. R263, R270, and R280 each carry omega-N-methylarginine.

Belongs to the ARS2 family. As to quaternary structure, interacts with CASP8AP2, ERBB4, NCBP1/CBP80 and DROSHA. Interacts with LUZP4. Interacts with NCBP2/CBP20 and NCBP3.

It localises to the nucleus. The protein resides in the nucleoplasm. The protein localises to the cytoplasm. Its function is as follows. Acts as a mediator between the cap-binding complex (CBC) and the primary microRNAs (miRNAs) processing machinery during cell proliferation. Contributes to the stability and delivery of capped primary miRNA transcripts to the primary miRNA processing complex containing DGCR8 and DROSHA, thereby playing a role in RNA-mediated gene silencing (RNAi) by miRNAs. Binds capped RNAs (m7GpppG-capped RNA); however interaction is probably mediated via its interaction with NCBP1/CBP80 component of the CBC complex. Involved in cell cycle progression at S phase. Does not directly confer arsenite resistance but rather modulates arsenic sensitivity. Independently of its activity on miRNAs, necessary and sufficient to promote neural stem cell self-renewal. Does so by directly binding SOX2 promoter and positively regulating its transcription. The protein is Serrate RNA effector molecule homolog (SRRT) of Cricetulus griseus (Chinese hamster).